The sequence spans 118 residues: Small ribosomal subunit protein uS13 (118 aa).

The segment at 94 to 118 (SLPVRGQRTKTNARTRKGPRKPIKK) is disordered.

Belongs to the universal ribosomal protein uS13 family. In terms of assembly, part of the 30S ribosomal subunit. Forms a loose heterodimer with protein S19. Forms two bridges to the 50S subunit in the 70S ribosome.

Located at the top of the head of the 30S subunit, it contacts several helices of the 16S rRNA. In the 70S ribosome it contacts the 23S rRNA (bridge B1a) and protein L5 of the 50S subunit (bridge B1b), connecting the 2 subunits; these bridges are implicated in subunit movement. Contacts the tRNAs in the A and P-sites. This chain is Small ribosomal subunit protein uS13, found in Actinobacillus pleuropneumoniae serotype 5b (strain L20).